Consider the following 625-residue polypeptide: Phosphomethylpyrimidine synthase (625 aa).

Substrate-binding positions include N230, M259, Y288, H324, 344-346 (SRG), 385-388 (DGLR), and E424. H428 contributes to the Zn(2+) binding site. Residue Y451 coordinates substrate. A Zn(2+)-binding site is contributed by H492. [4Fe-4S] cluster is bound by residues C572, C575, and C580.

The protein belongs to the ThiC family. Homodimer. Requires [4Fe-4S] cluster as cofactor.

The enzyme catalyses 5-amino-1-(5-phospho-beta-D-ribosyl)imidazole + S-adenosyl-L-methionine = 4-amino-2-methyl-5-(phosphooxymethyl)pyrimidine + CO + 5'-deoxyadenosine + formate + L-methionine + 3 H(+). The protein operates within cofactor biosynthesis; thiamine diphosphate biosynthesis. In terms of biological role, catalyzes the synthesis of the hydroxymethylpyrimidine phosphate (HMP-P) moiety of thiamine from aminoimidazole ribotide (AIR) in a radical S-adenosyl-L-methionine (SAM)-dependent reaction. This chain is Phosphomethylpyrimidine synthase, found in Xanthomonas campestris pv. campestris (strain 8004).